The following is a 53-amino-acid chain: uncharacterized protein (53 aa).

This is an uncharacterized protein from Plasmodium falciparum (isolate fcm17 / Senegal).